Reading from the N-terminus, the 1380-residue chain is Tripeptidyl-peptidase 2 (1380 aa).

The region spanning serine 110 to tyrosine 619 is the Peptidase S8 domain. Catalysis depends on charge relay system residues aspartate 145, histidine 372, and serine 558. The tract at residues aspartate 1099–arginine 1143 is disordered. Low complexity predominate over residues proline 1110–proline 1120. Coiled-coil stretches lie at residues lysine 1152–tyrosine 1181 and glutamate 1238–lysine 1300.

This sequence belongs to the peptidase S8 family. Assembles into a large oligomeric complex containing two related proteins 153 and 142 kDa that are derived from the single TPP2 gene. The 142 kDa form mainly differs from the 153 kDa form by a truncation at the C-terminal end.

It catalyses the reaction Release of an N-terminal tripeptide from a polypeptide.. Inhibited by alanine-alanine-phenylalanine-chloromethylketone, butabindide and phenylmethanesulfonyl fluoride (PMSF), but not by leupeptin, N-ethylmaleimide, EDTA, MG132 and lactacystin. Serine protease of the proteasome pathway that may function with the 20S proteasome to degrade oxidized proteins generated by environmental stress. This chain is Tripeptidyl-peptidase 2 (TPP2), found in Arabidopsis thaliana (Mouse-ear cress).